The following is a 307-amino-acid chain: MRIVFAGTPEFAVSSLRAAARHHEVVAVYTQPDRPAGRGRGLAPSPVKLEAVARGIPVYQPESLKDAAAQQQLRDLQPDLMVVVAYGLILPKAVLAIPTHGCWNVHASLLPRWRGAAPIQRAIQAGDAKTGVCLMQMEAGLDTGPVLLHQELPIASTDTGGQLHDKLAELGAQVLSDGLGLLRAGIKPIARPQPEQGVTYAHKLDKAEARLDWAQDADALARTVRAFNPWPIAEATLAGERVRIHGAVALEADHGQAPGTVLAAGRDGIDIACGQGALRLRVLQREGGKAITAADYLNARRDLRVGA.

Residue 108–111 participates in (6S)-5,6,7,8-tetrahydrofolate binding; sequence SLLP.

Belongs to the Fmt family.

The catalysed reaction is L-methionyl-tRNA(fMet) + (6R)-10-formyltetrahydrofolate = N-formyl-L-methionyl-tRNA(fMet) + (6S)-5,6,7,8-tetrahydrofolate + H(+). Functionally, attaches a formyl group to the free amino group of methionyl-tRNA(fMet). The formyl group appears to play a dual role in the initiator identity of N-formylmethionyl-tRNA by promoting its recognition by IF2 and preventing the misappropriation of this tRNA by the elongation apparatus. The sequence is that of Methionyl-tRNA formyltransferase from Stenotrophomonas maltophilia (strain K279a).